The sequence spans 185 residues: Ribosome-recycling factor (185 aa).

It belongs to the RRF family.

It localises to the cytoplasm. Its function is as follows. Responsible for the release of ribosomes from messenger RNA at the termination of protein biosynthesis. May increase the efficiency of translation by recycling ribosomes from one round of translation to another. The sequence is that of Ribosome-recycling factor from Corynebacterium efficiens (strain DSM 44549 / YS-314 / AJ 12310 / JCM 11189 / NBRC 100395).